The sequence spans 251 residues: Cathelicidin-B1 (251 aa).

The N-terminal stretch at 1 to 20 (MGRMWASEVLLLLLLGSSRA) is a signal peptide. The propeptide occupies 21-211 (VTPGLDVSTA…ELRCRPLRPQ (191 aa)). Residues 29 to 109 (TAPGLDGSIP…TITPKQDGSI (81 aa)) are disordered. Disulfide bonds link Cys-172/Cys-181 and Cys-189/Cys-205.

It belongs to the cathelicidin family. As to expression, detected in bursa of Fabricius, in filamentous structures surrounding the basal and lateral surfaces of bursal M cells (at protein level). Detected in bursa of Fabricius, in secretory enterocytes of the interfollicular bursal epithelium, but not in M cells.

The protein localises to the secreted. Has potent antimicrobial activity against Gram-positive and Gram-negative bacteria (in vitro). May play a role in the innate immune response. This Gallus gallus (Chicken) protein is Cathelicidin-B1 (CATHB1).